Consider the following 448-residue polypeptide: Amino-acid acetyltransferase (448 aa).

Residues glutamate 295–arginine 433 enclose the N-acetyltransferase domain.

It belongs to the acetyltransferase family. ArgA subfamily. In terms of assembly, homohexamer.

The protein localises to the cytoplasm. The enzyme catalyses L-glutamate + acetyl-CoA = N-acetyl-L-glutamate + CoA + H(+). It participates in amino-acid biosynthesis; L-arginine biosynthesis; N(2)-acetyl-L-ornithine from L-glutamate: step 1/4. The chain is Amino-acid acetyltransferase from Photorhabdus laumondii subsp. laumondii (strain DSM 15139 / CIP 105565 / TT01) (Photorhabdus luminescens subsp. laumondii).